The primary structure comprises 383 residues: MRTRRDVPADRSGRSRVSRHPGLSVPSRTLEPVQELHDAPLAPLTTFRLGGPATRLLTATTDAEVIAAVREADDTGTPLLLIGGGSNLVIGDKGFDGTALHIATRGFRLDGTTLELAAGEIWTDAVARTVEAGLAGVECLAGIPGSAGATPIQNVGAYGQEVSATITEVTAYDRRSGETVALSNADCAFSYRHSRFKAEPERYVVLRVRFELENADGLSAPLRYAETARALGVEAGDRVPLTAARETVLRLRAGKGMVLDPEDHDTWSAGSFFTNPILTDEEFAAFRSRVAGRLGAAVEPPAFPAGEGRVKTSAAWLIDKAGFTKGYGTGPARISTKHTLALTNRGEATTEDLLALAREVVAGVHEAFGVTLVNEPVTVGVAL.

Residues 1-13 (MRTRRDVPADRSG) are compositionally biased toward basic and acidic residues. Residues 1–26 (MRTRRDVPADRSGRSRVSRHPGLSVP) are disordered. Residues 49–215 (LGGPATRLLT…LRVRFELENA (167 aa)) form the FAD-binding PCMH-type domain. Residue Arg192 is part of the active site. Ser271 acts as the Proton donor in catalysis. Glu375 is a catalytic residue.

This sequence belongs to the MurB family. FAD is required as a cofactor.

The protein resides in the cytoplasm. The enzyme catalyses UDP-N-acetyl-alpha-D-muramate + NADP(+) = UDP-N-acetyl-3-O-(1-carboxyvinyl)-alpha-D-glucosamine + NADPH + H(+). It functions in the pathway cell wall biogenesis; peptidoglycan biosynthesis. Functionally, cell wall formation. This is UDP-N-acetylenolpyruvoylglucosamine reductase from Streptomyces coelicolor (strain ATCC BAA-471 / A3(2) / M145).